The sequence spans 610 residues: Elongation factor 4 (610 aa).

Positions 11-193 (ENIRNFSIIA…QIVEKVPAPS (183 aa)) constitute a tr-type G domain. GTP contacts are provided by residues 23–28 (DHGKST) and 140–143 (NKID).

It belongs to the TRAFAC class translation factor GTPase superfamily. Classic translation factor GTPase family. LepA subfamily.

It localises to the cell membrane. The enzyme catalyses GTP + H2O = GDP + phosphate + H(+). Its function is as follows. Required for accurate and efficient protein synthesis under certain stress conditions. May act as a fidelity factor of the translation reaction, by catalyzing a one-codon backward translocation of tRNAs on improperly translocated ribosomes. Back-translocation proceeds from a post-translocation (POST) complex to a pre-translocation (PRE) complex, thus giving elongation factor G a second chance to translocate the tRNAs correctly. Binds to ribosomes in a GTP-dependent manner. This Streptococcus equi subsp. zooepidemicus (strain MGCS10565) protein is Elongation factor 4.